Here is a 276-residue protein sequence, read N- to C-terminus: Caspase-6 (276 aa).

Residues 1–5 constitute a propeptide that is removed on maturation; the sequence is MTETD. Residues 25–27 are tri-arginine exosite; the sequence is KRR. The residue at position 62 (serine 62) is a Phosphoserine. The active site involves histidine 104. Residues 108–125 are 130's region; the sequence is NHVYAYDAKIEIQTLTGL. The active site involves cysteine 146. A propeptide spanning residues 163–175 is cleaved from the precursor; the sequence is HQTDKLDNVTQVD. Serine 239 is modified (phosphoserine). 2 S-palmitoyl cysteine lipidation sites follow: cysteine 246 and cysteine 259.

Belongs to the peptidase C14A family. As to quaternary structure, heterotetramer that consists of two anti-parallel arranged heterodimers, each one formed by a 18 kDa (p18) and a 11 kDa (p11) subunit. Interacts with BIRC6/bruce. Interacts with RIPK3. In terms of assembly, heterotetramer that consists of two anti-parallel arranged heterodimers, each one formed by a 18 kDa (Caspase-6 subunit p18) and a 11 kDa (Caspase-6 subunit p11) subunit. Post-translationally, phosphorylated by NUAK1; phosphorylation inhibits self-activation. Phosphorylation at Ser-239 by AMP-activated protein kinase (PRKAA1 or PRKAA2) inhibits autocleavage, preventing caspase activation, thereby preventing hepatocyte apoptosis. Palmitoylation by ZDHHC17 blocks dimerization and subsequent activation, leading to inhibit the cysteine protease activity. In terms of processing, can be cleaved and activated by different caspases, depending on the context. Cleaved and activated by caspase-8 (CASP8) and subsequently by caspase-3 (CASP3). Can also undergo autoactivation by mediating autocleavage at Asp-162 and Asp-175, while it is not able to cleave its N-terminal disordered prodomain. Cleaved and activated by CASP1, possibly in the context of inflammation. In terms of tissue distribution, highly expressed in lung, liver, kidney, testis, and heart. Lower levels in spleen, skeletal muscle and brain. Expressed in neurons.

It localises to the cytoplasm. The protein localises to the nucleus. The enzyme catalyses Strict requirement for Asp at position P1 and has a preferred cleavage sequence of Val-Glu-His-Asp-|-.. With respect to regulation, during activation, the N-terminal disordered prodomain is removed by cleavage. Concomitantly, double cleavage gives rise to a large 18-kDa and a small 11-kDa subunit. The two large and two small subunits then assemble to form the active CASP6 complex. Can be cleaved and activated by different caspases, depending on the context. Cleaved and activated by caspase-8 (CASP8) and subsequently by caspase-3 (CASP3). Can also undergo autoactivation by mediating autocleavage at Asp-162 and Asp-175, while it is not able to cleave its N-terminal disordered prodomain. Intramolecular cleavage at Asp-175 is a prerequisite for CASP6 self-activation. Cleaved and activated by CASP1 in neurons, possibly in the context of inflammation. Phosphorylation at Ser-239 inhibits autocleavage, preventing caspase activation. Functionally, cysteine protease that plays essential roles in programmed cell death, axonal degeneration, development and innate immunity. Acts as a non-canonical executioner caspase during apoptosis: localizes in the nucleus and cleaves the nuclear structural protein NUMA1 and lamin A/LMNA thereby inducing nuclear shrinkage and fragmentation. Lamin-A/LMNA cleavage is required for chromatin condensation and nuclear disassembly during apoptotic execution. Acts as a regulator of liver damage by promoting hepatocyte apoptosis: in absence of phosphorylation by AMP-activated protein kinase (AMPK), catalyzes cleavage of BID, leading to cytochrome c release, thereby participating in nonalcoholic steatohepatitis. Cleaves PARK7/DJ-1 in cells undergoing apoptosis. Involved in intrinsic apoptosis by mediating cleavage of RIPK1. Furthermore, cleaves many transcription factors such as NF-kappa-B and cAMP response element-binding protein/CREBBP. Cleaves phospholipid scramblase proteins XKR4 and XKR9. In addition to apoptosis, involved in different forms of programmed cell death. Plays an essential role in defense against viruses by acting as a central mediator of the ZBP1-mediated pyroptosis, apoptosis, and necroptosis (PANoptosis), independently of its cysteine protease activity. PANoptosis is a unique inflammatory programmed cell death, which provides a molecular scaffold that allows the interactions and activation of machinery required for inflammasome/pyroptosis, apoptosis and necroptosis. Mechanistically, interacts with RIPK3 and enhances the interaction between RIPK3 and ZBP1, leading to ZBP1-mediated inflammasome activation and cell death. Plays an essential role in axon degeneration during axon pruning which is the remodeling of axons during neurogenesis but not apoptosis. Regulates B-cell programs both during early development and after antigen stimulation. Its function is as follows. (Microbial infection) Proteolytically cleaves the N protein of coronaviruses. The cleavage leads to two fragments and modulates coronavirus replication by regulating IFN signaling. The two fragments produced by the cleavage interact with IRF3 inhibiting its nuclear translocation after activation and reduce the expression of IFNB and IFN-stimulated genes. The protein is Caspase-6 of Mus musculus (Mouse).